The chain runs to 199 residues: NADH-quinone oxidoreductase subunit C (199 aa).

This sequence belongs to the complex I 30 kDa subunit family. NDH-1 is composed of 14 different subunits. Subunits NuoB, C, D, E, F, and G constitute the peripheral sector of the complex.

Its subcellular location is the cell inner membrane. It carries out the reaction a quinone + NADH + 5 H(+)(in) = a quinol + NAD(+) + 4 H(+)(out). Functionally, NDH-1 shuttles electrons from NADH, via FMN and iron-sulfur (Fe-S) centers, to quinones in the respiratory chain. The immediate electron acceptor for the enzyme in this species is believed to be ubiquinone. Couples the redox reaction to proton translocation (for every two electrons transferred, four hydrogen ions are translocated across the cytoplasmic membrane), and thus conserves the redox energy in a proton gradient. This is NADH-quinone oxidoreductase subunit C from Rhodobacter capsulatus (Rhodopseudomonas capsulata).